Consider the following 552-residue polypeptide: MAGUK p55 subfamily member 2 (552 aa).

2 consecutive L27 domains span residues 8 to 59 (SESA…EETK) and 60 to 118 (LEAV…YETP). A Phosphoserine modification is found at Ser-42. Thr-117 bears the Phosphothreonine mark. Ser-121 bears the Phosphoserine mark. Residues 140–219 (MVGIRKTAGE…SVILKILPSY (80 aa)) form the PDZ domain. An SH3 domain is found at 225–293 (PRQVFVKCHF…PSQLLEEKRK (69 aa)). The 188-residue stretch at 350–537 (RKTLVLIGAQ…TFRELQTAME (188 aa)) folds into the Guanylate kinase-like domain.

The protein belongs to the MAGUK family. As to quaternary structure, can homomultimerise. Interacts with CACNG2. Interacts (via the SH3-Guanylate kinase-like sub-module) with DLG4/PSD95 and DLGAP1/GKAP. Interacts (via the PDZ domain) with CADM1 (via C-terminus). Interacts with KCNN2/SK2 (via N-terminal domain). Interacts with SRC. Phosphorylated by SRC. In terms of tissue distribution, expressed in pyramidal neurons of CA1 region of the hippocampus.

Its subcellular location is the cell projection. The protein resides in the dendrite. It is found in the postsynaptic density. The protein localises to the cytoplasm. It localises to the cytoskeleton. Its subcellular location is the membrane. Postsynaptic MAGUK scaffold protein that links CADM1 cell adhesion molecules to core components of the postsynaptic density. In CA1 pyramidal neurons, required for synaptic KCNN2-containing channel function and long-term potentiation expression. Seems to negatively regulate SRC function in epithelial cells. This chain is MAGUK p55 subfamily member 2, found in Mus musculus (Mouse).